The following is a 260-amino-acid chain: Vesicle-associated membrane protein/synaptobrevin-binding protein (260 aa).

Over 1–238 the chain is Cytoplasmic; it reads MASHEQALIL…SPAPAAAVRA (238 aa). Residues 7-125 form the MSP domain; that stretch reads ALILEPAGEL…MDTKLRCVFE (119 aa). The segment at 127–177 is disordered; that stretch reads PDGSHQAPASDASRATDAGAHFSESALEDPTVASRKTETQSPKRVGAVGSA. Residues 172-216 are a coiled coil; it reads GAVGSAGEDVKKLQHELKKAQSEITSLKGENSQLKDEGIRLRKVA. A helical; Anchor for type IV membrane protein transmembrane segment spans residues 239–259; that stretch reads FPPVVYVVAAIILGLIIGKFL.

The protein belongs to the VAMP-associated protein (VAP) (TC 9.B.17) family. Detected only in the central nervous system and the gill of aplysia.

It is found in the membrane. The protein localises to the synapse. The protein resides in the synaptosome. In terms of biological role, required for neurotransmitter release. Interacts with VAMP. The polypeptide is Vesicle-associated membrane protein/synaptobrevin-binding protein (Aplysia californica (California sea hare)).